Consider the following 310-residue polypeptide: Homeobox protein Hox-A13a (310 aa).

A DNA-binding region (homeobox) is located at residues 244-303 (GRKKRVPYTKVQLKELEREYATNKFITKDKRRRISAQTNLSERQVTIWFQNRRVKEKKVV).

This sequence belongs to the Abd-B homeobox family.

It localises to the nucleus. Sequence-specific transcription factor which is part of a developmental regulatory system that provides cells with specific positional identities on the anterior-posterior axis. The protein is Homeobox protein Hox-A13a (hoxa13a) of Danio rerio (Zebrafish).